The sequence spans 528 residues: Tyrosine--tRNA ligase, cytoplasmic (528 aa).

An N-acetylmethionine modification is found at methionine 1. At glycine 2 the chain carries N-acetylglycine; in Tyrosine--tRNA ligase, cytoplasmic, N-terminally processed. Residue tyrosine 39 participates in L-tyrosine binding. Tyrosine 39 is a trans-resveratrol binding site. A 'HIGH' region motif is present at residues 44–52 (TTGKPHVAY). L-tyrosine-binding residues include tyrosine 166, glutamine 170, aspartate 173, and glutamine 188. 2 residues coordinate trans-resveratrol: glutamine 170 and aspartate 173. Lysine 197 is subject to N6-acetyllysine. Phosphoserine is present on serine 205. Lysine 206 carries the N6-acetyllysine modification. The short motif at 222 to 226 (KMSSS) is the 'KMSKS' region element. The short motif at 242–247 (KKKLKK) is the Nuclear localization signal element. A disordered region spans residues 339–363 (AAYPDPSKQKPPAKGPAKNSEPEEV). Positions 364-468 (IPSRLDIRVG…AGSAPGERVF (105 aa)) constitute a tRNA-binding domain. Phosphoserine is present on serine 386. 3 positions are modified to N6-acetyllysine: lysine 474, lysine 482, and lysine 490.

The protein belongs to the class-I aminoacyl-tRNA synthetase family. In terms of assembly, homodimer. Interacts (when binding to resveratrol) with PARP1; interaction stimulates the poly-ADP-ribosyltransferase activity of PARP1.

The protein localises to the cytoplasm. It is found in the nucleus. The catalysed reaction is tRNA(Tyr) + L-tyrosine + ATP = L-tyrosyl-tRNA(Tyr) + AMP + diphosphate + H(+). Resveratrol strongly inhibits the tyrosine--tRNA ligase activity. In terms of biological role, tyrosine--tRNA ligase that catalyzes the attachment of tyrosine to tRNA(Tyr) in a two-step reaction: tyrosine is first activated by ATP to form Tyr-AMP and then transferred to the acceptor end of tRNA(Tyr). Also acts as a positive regulator of poly-ADP-ribosylation in the nucleus, independently of its tyrosine--tRNA ligase activity. Activity is switched upon resveratrol-binding: resveratrol strongly inhibits the tyrosine--tRNA ligase activity and promotes relocalization to the nucleus, where YARS1 specifically stimulates the poly-ADP-ribosyltransferase activity of PARP1. This is Tyrosine--tRNA ligase, cytoplasmic (Yars1) from Mus musculus (Mouse).